The following is a 256-amino-acid chain: Ubiquinone/menaquinone biosynthesis C-methyltransferase UbiE (256 aa).

Positions 1–12 (MNDQRKGDHAEP) are enriched in basic and acidic residues. Positions 1–23 (MNDQRKGDHAEPTTHFGYQDVPE) are disordered. S-adenosyl-L-methionine contacts are provided by residues threonine 79, aspartate 100, and 128–129 (DA).

It belongs to the class I-like SAM-binding methyltransferase superfamily. MenG/UbiE family.

The enzyme catalyses a 2-demethylmenaquinol + S-adenosyl-L-methionine = a menaquinol + S-adenosyl-L-homocysteine + H(+). The catalysed reaction is a 2-methoxy-6-(all-trans-polyprenyl)benzene-1,4-diol + S-adenosyl-L-methionine = a 5-methoxy-2-methyl-3-(all-trans-polyprenyl)benzene-1,4-diol + S-adenosyl-L-homocysteine + H(+). Its pathway is quinol/quinone metabolism; menaquinone biosynthesis; menaquinol from 1,4-dihydroxy-2-naphthoate: step 2/2. It participates in cofactor biosynthesis; ubiquinone biosynthesis. Functionally, methyltransferase required for the conversion of demethylmenaquinol (DMKH2) to menaquinol (MKH2) and the conversion of 2-polyprenyl-6-methoxy-1,4-benzoquinol (DDMQH2) to 2-polyprenyl-3-methyl-6-methoxy-1,4-benzoquinol (DMQH2). In Pseudomonas putida (strain GB-1), this protein is Ubiquinone/menaquinone biosynthesis C-methyltransferase UbiE.